A 370-amino-acid chain; its full sequence is Ubiquitin-binding protein Rv1468c (370 aa).

The segment at 1-72 is UBA; that stretch reads MSFVVANTEF…QVLSAQAAAF (72 aa). In terms of domain architecture, PE spans 1 to 93; sequence MSFVVANTEF…AQAYAAAEAT (93 aa).

The protein belongs to the mycobacterial PE family. PGRS subfamily. In terms of assembly, interacts directly with host polyubiquitin in a UBA-dependent manner.

It localises to the secreted. The protein localises to the cell wall. The protein resides in the cell surface. Mediates direct binding of host ubiquitin (Ub) to the mycobacterial surface, which triggers host xenophagy. Interaction between Rv1468c and ubiquitin recruits autophagy receptor p62 to deliver mycobacteria into LC3-associated autophagosomes. It could be a viable evolutionary strategy adopted by M.tuberculosis to maintain long-term intracellular survival through self-controlling its intracellular bacterial loads to avoid excessive host inflammatory immune responses. The sequence is that of Ubiquitin-binding protein Rv1468c from Mycobacterium tuberculosis (strain ATCC 25618 / H37Rv).